Reading from the N-terminus, the 73-residue chain is Large ribosomal subunit protein bL31 (73 aa).

It belongs to the bacterial ribosomal protein bL31 family. Type A subfamily. In terms of assembly, part of the 50S ribosomal subunit.

Binds the 23S rRNA. This chain is Large ribosomal subunit protein bL31 (rpmE), found in Roseobacter denitrificans (strain ATCC 33942 / OCh 114) (Erythrobacter sp. (strain OCh 114)).